The chain runs to 80 residues: Small ribosomal subunit protein uS17 (80 aa).

The protein belongs to the universal ribosomal protein uS17 family. In terms of assembly, part of the 30S ribosomal subunit.

One of the primary rRNA binding proteins, it binds specifically to the 5'-end of 16S ribosomal RNA. This is Small ribosomal subunit protein uS17 from Cereibacter sphaeroides (strain ATCC 17029 / ATH 2.4.9) (Rhodobacter sphaeroides).